The chain runs to 36 residues: Mating hormone A-factor 1 (36 aa).

Positions 1–21 (MQPSTATAAPKEKTSSEKKDN) are excised as a propeptide. Cysteine methyl ester is present on Cys-33. Cys-33 carries the S-farnesyl cysteine lipid modification. Positions 34–36 (VIA) are cleaved as a propeptide — removed in mature form.

The protein localises to the cell membrane. In terms of biological role, the active factor is excreted into the culture medium by haploid cells of the A mating type and acts on cells of the opposite mating type (type alpha). It mediates the conjugation process between the two types by inhibiting the initiation of DNA synthesis in type alpha cells and synchronizing them with type A. The protein is Mating hormone A-factor 1 (MFA1) of Saccharomyces cerevisiae (strain ATCC 204508 / S288c) (Baker's yeast).